Here is a 42-residue protein sequence, read N- to C-terminus: uncharacterized protein (42 aa).

Residues 5-27 form a helical membrane-spanning segment; sequence FLHTNITIIPHSVLYVSLSYYII.

The protein resides in the membrane. This is an uncharacterized protein from Saccharomyces cerevisiae (strain ATCC 204508 / S288c) (Baker's yeast).